Here is a 1054-residue protein sequence, read N- to C-terminus: Kinesin-like protein KIN-7G (1054 aa).

The Kinesin motor domain occupies 17–341 (KIFVSVRLRP…LLFASCAKEV (325 aa)). Residue 105–112 (GQTSSGKT) coordinates ATP. 2 coiled-coil regions span residues 350-425 (VMSD…IGEA) and 611-640 (TETAEEKEEKEETEEKEEEEEERVKEVSSV). Disordered regions lie at residues 600-648 (CEPE…KEKS) and 740-760 (ERAESNLKPSNSKRPPLPKHI). The segment covering 613 to 631 (TAEEKEEKEETEEKEEEEE) has biased composition (acidic residues).

This sequence belongs to the TRAFAC class myosin-kinesin ATPase superfamily. Kinesin family. KIN-7 subfamily.

The chain is Kinesin-like protein KIN-7G from Arabidopsis thaliana (Mouse-ear cress).